The chain runs to 380 residues: Cytochrome b (380 aa).

The next 4 helical transmembrane spans lie at 33–53 (FGSLLGLCLAAQILTGLFLAM), 77–98 (WLIRSMHANGASFFFICIYLHI), 113–133 (WNIGVILLLLVMMTAFVGYVL), and 178–198 (FFAFHFLFPFVIAAMTMIHLI). Positions 83 and 97 each coordinate heme b. 2 residues coordinate heme b: His182 and His196. An a ubiquinone-binding site is contributed by His201. The next 4 helical transmembrane spans lie at 226-246 (YKDLLGFAILLIALITLALFS), 288-308 (LGGVLALLFSILILMLVPVLH), 320-340 (FSQFLFWLLVANVAILTWIGG), and 347-367 (FIIIGQIASFLYFFIFLILVP).

It belongs to the cytochrome b family. As to quaternary structure, the cytochrome bc1 complex contains 3 respiratory subunits (MT-CYB, CYC1 and UQCRFS1), 2 core proteins (UQCRC1 and UQCRC2) and probably 6 low-molecular weight proteins. The cofactor is heme b.

It is found in the mitochondrion inner membrane. In terms of biological role, component of the ubiquinol-cytochrome c reductase complex (complex III or cytochrome b-c1 complex) that is part of the mitochondrial respiratory chain. The b-c1 complex mediates electron transfer from ubiquinol to cytochrome c. Contributes to the generation of a proton gradient across the mitochondrial membrane that is then used for ATP synthesis. The polypeptide is Cytochrome b (mt-cyb) (Astronotus ocellatus (Oscar)).